The chain runs to 212 residues: Cytidylate kinase (212 aa).

7–15 contributes to the ATP binding site; it reads GPAASGKGT.

This sequence belongs to the cytidylate kinase family. Type 1 subfamily.

The protein resides in the cytoplasm. The catalysed reaction is CMP + ATP = CDP + ADP. It carries out the reaction dCMP + ATP = dCDP + ADP. The protein is Cytidylate kinase of Rhodopseudomonas palustris (strain BisB5).